Reading from the N-terminus, the 130-residue chain is Small ribosomal subunit protein uS8 (130 aa).

This sequence belongs to the universal ribosomal protein uS8 family. Part of the 30S ribosomal subunit. Contacts proteins S5 and S12.

Functionally, one of the primary rRNA binding proteins, it binds directly to 16S rRNA central domain where it helps coordinate assembly of the platform of the 30S subunit. In Yersinia pseudotuberculosis serotype O:1b (strain IP 31758), this protein is Small ribosomal subunit protein uS8.